The primary structure comprises 1196 residues: Beta/alpha-amylase (1196 aa).

A signal peptide spans 1-35; sequence MTLYRSLWKKGCMLLLSLVLSLTAFIGSPSNTASA. A beta-amylase region spans residues 36-454; that stretch reads AVADDFQASV…IISKAKPDNN (419 aa). Position 76 (aspartate 76) interacts with substrate. 2 residues coordinate Ca(2+): glutamate 83 and aspartate 87. Histidine 116 and aspartate 124 together coordinate substrate. Cysteine 118 and cysteine 126 form a disulfide bridge. Position 170 (glutamate 170) interacts with Ca(2+). The Proton donor role is filled by glutamate 198. Positions 314, 319, and 357 each coordinate substrate. The active-site Proton acceptor is glutamate 394. Substrate contacts are provided by residues 395 to 396 and arginine 423; that span reads NA. 2 repeats span residues 455–558 and 565–668; these read GGTG…APAG and GGTT…APSG. The segment covering 544 to 553 has biased composition (polar residues); the sequence is NSGNAGTITS. The tract at residues 544–566 is disordered; the sequence is NSGNAGTITSGAPAGANPGDGGG. Residues 669–1196 form an alpha-amylase region; it reads SVLSVVTSTY…APKEVKVFTK (528 aa).

This sequence in the N-terminal section; belongs to the glycosyl hydrolase 14 family. The protein in the C-terminal section; belongs to the glycosyl hydrolase 13 family. It depends on Ca(2+) as a cofactor.

Its subcellular location is the secreted. It catalyses the reaction Hydrolysis of (1-&gt;4)-alpha-D-glucosidic linkages in polysaccharides so as to remove successive maltose units from the non-reducing ends of the chains.. The catalysed reaction is Endohydrolysis of (1-&gt;4)-alpha-D-glucosidic linkages in polysaccharides containing three or more (1-&gt;4)-alpha-linked D-glucose units.. Functionally, the precursor protein is proteolytically cleaved to produce multiform beta-amylases and a 48 kDa alpha-amylase after secretion. In Paenibacillus polymyxa (Bacillus polymyxa), this protein is Beta/alpha-amylase.